A 261-amino-acid polypeptide reads, in one-letter code: Cytochrome c oxidase subunit 3 (261 aa).

Over 1–15 (MAHQAHPYHMVDPSP) the chain is Mitochondrial matrix. A helical transmembrane segment spans residues 16 to 34 (WPLTGATAALLMTSGLAIW). At 35-40 (FHFHSL) the chain is on the mitochondrial intermembrane side. Residues 41–66 (LLLYLGLTLLLLTMIQWWRDIIREGT) form a helical membrane-spanning segment. Residues 67–72 (FQGHHT) are Mitochondrial matrix-facing. Residues 73–105 (PPVQKGLRYGMILFIVSEVFFFLGFFWAFYHSS) traverse the membrane as a helical segment. At 106–128 (LAPTPELGGCWPPTGINPLDPFE) the chain is on the mitochondrial intermembrane side. Residues 129–152 (VPLLNTAVLLASGVTVTWAHHGLM) traverse the membrane as a helical segment. At 153-155 (EGN) the chain is on the mitochondrial matrix side. The helical transmembrane segment at 156–183 (RKEAIQALTLTIILGVYFTALQAMEYYE) threads the bilayer. Residues 184 to 190 (APFTIAD) lie on the Mitochondrial intermembrane side of the membrane. Residues 191–223 (GVYGTTFFVATGFHGLHVIIGSTFLAVCLLRQV) traverse the membrane as a helical segment. The Mitochondrial matrix segment spans residues 224 to 232 (LYHFTSEHH). The chain crosses the membrane as a helical span at residues 233 to 256 (FGFEAAAWYWHFVDVVWLFLYVSI). Topologically, residues 257-261 (YWWGS) are mitochondrial intermembrane.

It belongs to the cytochrome c oxidase subunit 3 family. Component of the cytochrome c oxidase (complex IV, CIV), a multisubunit enzyme composed of 14 subunits. The complex is composed of a catalytic core of 3 subunits MT-CO1, MT-CO2 and MT-CO3, encoded in the mitochondrial DNA, and 11 supernumerary subunits COX4I, COX5A, COX5B, COX6A, COX6B, COX6C, COX7A, COX7B, COX7C, COX8 and NDUFA4, which are encoded in the nuclear genome. The complex exists as a monomer or a dimer and forms supercomplexes (SCs) in the inner mitochondrial membrane with NADH-ubiquinone oxidoreductase (complex I, CI) and ubiquinol-cytochrome c oxidoreductase (cytochrome b-c1 complex, complex III, CIII), resulting in different assemblies (supercomplex SCI(1)III(2)IV(1) and megacomplex MCI(2)III(2)IV(2)).

It is found in the mitochondrion inner membrane. The enzyme catalyses 4 Fe(II)-[cytochrome c] + O2 + 8 H(+)(in) = 4 Fe(III)-[cytochrome c] + 2 H2O + 4 H(+)(out). Functionally, component of the cytochrome c oxidase, the last enzyme in the mitochondrial electron transport chain which drives oxidative phosphorylation. The respiratory chain contains 3 multisubunit complexes succinate dehydrogenase (complex II, CII), ubiquinol-cytochrome c oxidoreductase (cytochrome b-c1 complex, complex III, CIII) and cytochrome c oxidase (complex IV, CIV), that cooperate to transfer electrons derived from NADH and succinate to molecular oxygen, creating an electrochemical gradient over the inner membrane that drives transmembrane transport and the ATP synthase. Cytochrome c oxidase is the component of the respiratory chain that catalyzes the reduction of oxygen to water. Electrons originating from reduced cytochrome c in the intermembrane space (IMS) are transferred via the dinuclear copper A center (CU(A)) of subunit 2 and heme A of subunit 1 to the active site in subunit 1, a binuclear center (BNC) formed by heme A3 and copper B (CU(B)). The BNC reduces molecular oxygen to 2 water molecules using 4 electrons from cytochrome c in the IMS and 4 protons from the mitochondrial matrix. This chain is Cytochrome c oxidase subunit 3 (MT-CO3), found in Scyliorhinus canicula (Small-spotted catshark).